We begin with the raw amino-acid sequence, 353 residues long: MFPSLQSFAKKVLARQHVSIDYHVILERCGLWWYKAPISLDCKHMLIKLPSFADGLDLNTALMLATKENNYQLIKLFTEWGADINYGLICANTPPVRELCWELGAKYRVDKKKIMHMFFKLIHPGTTSSNIILCLKLFNDNPFSAYVIIREIKSSIYWKLKKLVEDTDVLSNISDGDMLTIYCFMVALQDNLREAISYVYQHFKYLNTWWLICALCFNKLFDLHNLYEKEKIRMDMDEMMRIACTKDNNFLTIYYCFILGANINLAMIASIRFYNMDNLFFCIDLGADAFEEAKALAEQRNYFLISHRLSLDIYSPDSSLLTLKEADPNKIYHLLKNYKSKNMTAYFNHDDTI.

The ANK repeat unit spans residues aspartate 57–isoleucine 89. The N-linked (GlcNAc...) asparagine; by host glycan is linked to asparagine 172. The next 2 membrane-spanning stretches (helical) occupy residues leucine 206–glutamate 228 and asparagine 249–isoleucine 271. Residue asparagine 342 is glycosylated (N-linked (GlcNAc...) asparagine; by host).

It belongs to the asfivirus MGF 360 family.

The protein localises to the host membrane. In terms of biological role, plays a role in virus cell tropism, and may be required for efficient virus replication in macrophages. The polypeptide is Protein MGF 360-10L (African swine fever virus (isolate Warthog/Namibia/Wart80/1980) (ASFV)).